Here is a 155-residue protein sequence, read N- to C-terminus: Small ribosomal subunit protein uS7 (155 aa).

Belongs to the universal ribosomal protein uS7 family. As to quaternary structure, part of the 30S ribosomal subunit. Contacts proteins S9 and S11.

Its function is as follows. One of the primary rRNA binding proteins, it binds directly to 16S rRNA where it nucleates assembly of the head domain of the 30S subunit. Is located at the subunit interface close to the decoding center, probably blocks exit of the E-site tRNA. This Helicobacter acinonychis (strain Sheeba) protein is Small ribosomal subunit protein uS7.